Consider the following 612-residue polypeptide: Threonine--tRNA ligase (612 aa).

The interval 218–509 is catalytic; sequence DHRKLGVELG…LSEHFWGNFP (292 aa). 3 residues coordinate Zn(2+): cysteine 310, histidine 361, and histidine 486.

The protein belongs to the class-II aminoacyl-tRNA synthetase family. Homodimer. The cofactor is Zn(2+).

It is found in the cytoplasm. The catalysed reaction is tRNA(Thr) + L-threonine + ATP = L-threonyl-tRNA(Thr) + AMP + diphosphate + H(+). Its function is as follows. Catalyzes the attachment of threonine to tRNA(Thr) in a two-step reaction: L-threonine is first activated by ATP to form Thr-AMP and then transferred to the acceptor end of tRNA(Thr). Also edits incorrectly charged L-seryl-tRNA(Thr). This Helicobacter acinonychis (strain Sheeba) protein is Threonine--tRNA ligase.